The sequence spans 259 residues: Global transcriptional regulator CodY (259 aa).

The segment at 1 to 155 is GAF domain; the sequence is MELLAKTRKL…SATVVGMEIL (155 aa). A DNA-binding region (H-T-H motif) is located at residues 203-222; that stretch reads ASKIADRVGITRSVIVNALR. Ser-215 carries the post-translational modification Phosphoserine.

This sequence belongs to the CodY family.

The protein resides in the cytoplasm. In terms of biological role, DNA-binding global transcriptional regulator which is involved in the adaptive response to starvation and acts by directly or indirectly controlling the expression of numerous genes in response to nutrient availability. During rapid exponential growth, CodY is highly active and represses genes whose products allow adaptation to nutrient depletion. The protein is Global transcriptional regulator CodY of Bacillus cytotoxicus (strain DSM 22905 / CIP 110041 / 391-98 / NVH 391-98).